Reading from the N-terminus, the 326-residue chain is Fructose operon regulatory protein (326 aa).

Residues 1–58 (MTLDEIAKLAGVSKTTASYVINGKAQKYRISEKTQHKVMAVVEQYNFRPDHAASALRA) enclose the HTH lacI-type domain. Residues 3-22 (LDEIAKLAGVSKTTASYVIN) constitute a DNA-binding region (H-T-H motif).

Homodimer.

With respect to regulation, interaction with F1P may induce a structural change in the DNA spacer region between the -35 and -10 elements, thereby facilitating RNAP binding to the promoter to trigger the transcriptional activation of the fru operon. Interaction with F1P does not release FruR from its binding sequence. Its function is as follows. Regulates the expression of the fruBKA (fru) operon, which encodes proteins involved in the import and metabolism of fructose. In the absence of fructose 1-phosphate (F1P), binds to the promoter region of fruB, interferes with the binding of the RNA polymerase (RNAP) to the promoter and represses the expression of the operon. In the presence of F1P, activates the transcription of the fru operon by facilitating the binding of RNAP to the promoter. Essential for the expression of the fru operon and thus for growth on fructose. The chain is Fructose operon regulatory protein from Vibrio cholerae serotype O1 (strain ATCC 39315 / El Tor Inaba N16961).